The sequence spans 143 residues: Large ribosomal subunit protein uL11 (143 aa).

This sequence belongs to the universal ribosomal protein uL11 family. Part of the ribosomal stalk of the 50S ribosomal subunit. Interacts with L10 and the large rRNA to form the base of the stalk. L10 forms an elongated spine to which L12 dimers bind in a sequential fashion forming a multimeric L10(L12)X complex. In terms of processing, one or more lysine residues are methylated.

Functionally, forms part of the ribosomal stalk which helps the ribosome interact with GTP-bound translation factors. In Pseudomonas putida (strain ATCC 700007 / DSM 6899 / JCM 31910 / BCRC 17059 / LMG 24140 / F1), this protein is Large ribosomal subunit protein uL11.